The following is a 167-amino-acid chain: uncharacterized protein (167 aa).

A divalent metal cation is bound by residues H48, H127, and H131.

Belongs to the DinB family.

This is an uncharacterized protein from Bacillus subtilis (strain 168).